The primary structure comprises 422 residues: UDP-N-acetylglucosamine 1-carboxyvinyltransferase (422 aa).

22-23 (KN) serves as a coordination point for phosphoenolpyruvate. UDP-N-acetyl-alpha-D-glucosamine is bound at residue R93. Catalysis depends on C117, which acts as the Proton donor. At C117 the chain carries 2-(S-cysteinyl)pyruvic acid O-phosphothioketal. Residues 122–126 (RPVDQ), D309, and I331 contribute to the UDP-N-acetyl-alpha-D-glucosamine site.

It belongs to the EPSP synthase family. MurA subfamily.

Its subcellular location is the cytoplasm. It catalyses the reaction phosphoenolpyruvate + UDP-N-acetyl-alpha-D-glucosamine = UDP-N-acetyl-3-O-(1-carboxyvinyl)-alpha-D-glucosamine + phosphate. Its pathway is cell wall biogenesis; peptidoglycan biosynthesis. Its function is as follows. Cell wall formation. Adds enolpyruvyl to UDP-N-acetylglucosamine. This is UDP-N-acetylglucosamine 1-carboxyvinyltransferase from Delftia acidovorans (strain DSM 14801 / SPH-1).